The primary structure comprises 418 residues: Elongation factor 1-gamma 1 (418 aa).

Residues 1–82 form the GST N-terminal domain; sequence MALVLHTFDG…YVTRSKSDNP (82 aa). Positions 87–213 constitute a GST C-terminal domain; the sequence is SLIEYAHIEQ…GDVKQADSVP (127 aa). The disordered stretch occupies residues 211-265; that stretch reads SVPQVQKKAAAPKEQKPKEAKKEAPKEAPKPKAAEKPEEEEEAPKPKPKNPLDLL. Residues 221-246 are compositionally biased toward basic and acidic residues; the sequence is APKEQKPKEAKKEAPKEAPKPKAAEK. The EF-1-gamma C-terminal domain occupies 258–418; that stretch reads PKNPLDLLPP…EALLDAKCFK (161 aa).

EF-1 is composed of four subunits: alpha, beta, delta, and gamma.

In terms of biological role, probably plays a role in anchoring the complex to other cellular components. This is Elongation factor 1-gamma 1 from Oryza sativa subsp. japonica (Rice).